Here is a 619-residue protein sequence, read N- to C-terminus: DNA mismatch repair protein MutL (619 aa).

A compositionally biased stretch (basic and acidic residues) spans 368 to 378 (VDEPKQVDEPK). Residues 368-403 (VDEPKQVDEPKQSSPVQEPKEEIPSFLPTVESKQND) are disordered.

Belongs to the DNA mismatch repair MutL/HexB family.

In terms of biological role, this protein is involved in the repair of mismatches in DNA. It is required for dam-dependent methyl-directed DNA mismatch repair. May act as a 'molecular matchmaker', a protein that promotes the formation of a stable complex between two or more DNA-binding proteins in an ATP-dependent manner without itself being part of a final effector complex. This chain is DNA mismatch repair protein MutL, found in Geobacillus sp. (strain WCH70).